A 471-amino-acid chain; its full sequence is Secretogranin-3 (471 aa).

Residues 1 to 22 (MGFLWTGSWILVLVLNSGPIQA) form the signal peptide. 3 disordered regions span residues 24–45 (PKPEGSQDKSLHNRELSAERPL), 89–108 (TVEKERQSIRSPPFDNQLNV), and 345–404 (KLEK…TDEA). Positions 28-45 (GSQDKSLHNRELSAERPL) are enriched in basic and acidic residues. Residue S40 is modified to Phosphoserine. The O-linked (Xyl...) (chondroitin sulfate) serine glycan is linked to S40. 2 stretches are compositionally biased toward basic and acidic residues: residues 345–355 (KLEKNTTDSKS) and 364–404 (KSQE…TDEA). S365 bears the Phosphoserine mark.

Interacts with CHGA. Interacts with secretogranin II/SCG2. Interacts (via C-terminus) with CPE. Expressed in various brain areas, with highest levels in the arcuate nucleus and the lateral hypothalamic area, as well as the paraventricular nucleus and the ventromedial hypothalamus (at protein level).

Its subcellular location is the cytoplasmic vesicle. It is found in the secretory vesicle. The protein resides in the secretory vesicle membrane. The protein localises to the secreted. Functionally, member of the granin protein family that regulates the biogenesis of secretory granules. Acts as a sorting receptor for intragranular proteins including chromogranin A/CHGA. May also play a role in angiogenesis. Promotes endothelial proliferation, migration and tube formation through MEK/ERK signaling pathway. This Mus musculus (Mouse) protein is Secretogranin-3 (Scg3).